Here is a 374-residue protein sequence, read N- to C-terminus: Acid phosphatase-like protein XcAP-1 (374 aa).

A signal peptide spans 1–17 (TTIILLIAFAAIQLSKA). Valine 25 lines the serotonin pocket. 3 disulfide bridges follow: cysteine 144–cysteine 372, cysteine 165–cysteine 219, and cysteine 345–cysteine 349. Serotonin contacts are provided by aspartate 245, aspartate 249, asparagine 271, and glutamine 283.

Belongs to the histidine acid phosphatase family.

Its subcellular location is the secreted. Its function is as follows. Probably modulates blood feeding of fleas on vertebrate species by binding and sequestering different mediators involved in the host response. Binds biogenic amines: serotonin, adrenaline and noradrenaline. Binds leukotriene C4. Does not bind histamine, leukotriene B4, leukotriene D4, leukotriene E4, ADP, and stable analogs of thromboxane A2: U-46619 and cTXA2. In Xenopsylla cheopis (Oriental rat flea), this protein is Acid phosphatase-like protein XcAP-1.